Here is a 469-residue protein sequence, read N- to C-terminus: Interstitial collagenase (469 aa).

Residues 1 to 18 (MLSLPLLLLLLWGMGSHS) form the signal peptide. Residues 19-99 (FPTVPSETRE…PRCGVPDVAE (81 aa)) constitute a propeptide, activation peptide. Residues 90-97 (PRCGVPDV) carry the Cysteine switch motif. Cys92 serves as a coordination point for Zn(2+). Ca(2+)-binding residues include Asp124 and Asp158. His168 and Asp170 together coordinate Zn(2+). Ca(2+) is bound by residues Asp175, Gly176, Gly178, and Asn180. His183 contributes to the Zn(2+) binding site. Arg190, Gly192, and Asp194 together coordinate Ca(2+). His196 lines the Zn(2+) pocket. Residues Asp198, Glu199, and Glu201 each contribute to the Ca(2+) site. His218 lines the Zn(2+) pocket. Glu219 is an active-site residue. Residues His222 and His228 each contribute to the Zn(2+) site. A Phosphothreonine modification is found at Thr274. Hemopexin repeat units follow at residues 275–324 (PEVC…WPQL), 325–371 (PNGL…FGFP), 374–422 (VKNI…FPGI), and 423–466 (GDKV…WFNC). A disulfide bond links Cys278 and Cys466. Asp285 and Gln329 together coordinate Ca(2+). A Phosphotyrosine; by PKDCC modification is found at Tyr360. Residues Asp378 and Asp427 each coordinate Ca(2+).

Belongs to the peptidase M10A family. Ca(2+) serves as cofactor. Zn(2+) is required as a cofactor. In terms of processing, tyrosine phosphorylated in platelets by PKDCC/VLK.

The protein localises to the secreted. It is found in the extracellular space. It localises to the extracellular matrix. It catalyses the reaction Cleavage of the triple helix of collagen at about three-quarters of the length of the molecule from the N-terminus, at 775-Gly-|-Ile-776 in the alpha1(I) chain. Cleaves synthetic substrates and alpha-macroglobulins at bonds where P1' is a hydrophobic residue.. Its activity is regulated as follows. Can be activated without removal of the activation peptide. In terms of biological role, cleaves collagens of types I, II, and III at one site in the helical domain. Also cleaves collagens of types VII and X. The protein is Interstitial collagenase (MMP1) of Equus caballus (Horse).